A 450-amino-acid chain; its full sequence is Tubulin alpha chain (450 aa).

Positions Met-1 to Cys-4 match the MREC motif motif. Gln-11 provides a ligand contact to GTP. Lys-40 is modified (N6-acetyllysine). GTP is bound by residues Glu-71, Ser-140, Gly-144, Thr-145, Thr-179, Asn-206, and Asn-228. Residue Glu-71 coordinates Mg(2+). Glu-254 is a catalytic residue. 5-glutamyl polyglutamate is present on Glu-444.

It belongs to the tubulin family. In terms of assembly, dimer of alpha and beta chains. A typical microtubule is a hollow water-filled tube with an outer diameter of 25 nm and an inner diameter of 15 nM. Alpha-beta heterodimers associate head-to-tail to form protofilaments running lengthwise along the microtubule wall with the beta-tubulin subunit facing the microtubule plus end conferring a structural polarity. Microtubules usually have 13 protofilaments but different protofilament numbers can be found in some organisms and specialized cells. It depends on Mg(2+) as a cofactor. In terms of processing, some glutamate residues at the C-terminus are polyglycylated, resulting in polyglycine chains on the gamma-carboxyl group. Glycylation is mainly limited to tubulin incorporated into axonemes (cilia and flagella) whereas glutamylation is prevalent in neuronal cells, centrioles, axonemes, and the mitotic spindle. Both modifications can coexist on the same protein on adjacent residues, and lowering polyglycylation levels increases polyglutamylation, and reciprocally. The precise function of polyglycylation is still unclear. Some glutamate residues at the C-terminus are polyglutamylated, resulting in polyglutamate chains on the gamma-carboxyl group. Polyglutamylation plays a key role in microtubule severing by spastin (SPAST). SPAST preferentially recognizes and acts on microtubules decorated with short polyglutamate tails: severing activity by SPAST increases as the number of glutamates per tubulin rises from one to eight, but decreases beyond this glutamylation threshold. Post-translationally, acetylation of alpha chains at Lys-40 is located inside the microtubule lumen. This modification has been correlated with increased microtubule stability, intracellular transport and ciliary assembly. In terms of processing, undergoes a tyrosination/detyrosination cycle, the cyclic removal and re-addition of a C-terminal tyrosine residue by the enzymes tubulin tyrosine carboxypeptidase (MATCAP, VASH1 or VASH2) and tubulin tyrosine ligase (TTL), respectively. Tyrosination promotes microtubule interaction with CAP-Gly microtubule plus-end tracking proteins. Tyrosinated tubulins regulate the initiation of dynein-driven motility. Post-translationally, detyrosination is involved in metaphase plate congression by guiding chromosomes during mitosis. Detyrosination increases microtubules-dependent mechanotransduction in dystrophic cardiac and skeletal muscle. In cardiomyocytes, detyrosinated microtubules are required to resist to contractile compression during contraction.

Its subcellular location is the cytoplasm. The protein localises to the cytoskeleton. It carries out the reaction GTP + H2O = GDP + phosphate + H(+). Tubulin is the major constituent of microtubules, a cylinder consisting of laterally associated linear protofilaments composed of alpha- and beta-tubulin heterodimers. Microtubules grow by the addition of GTP-tubulin dimers to the microtubule end, where a stabilizing cap forms. Below the cap, tubulin dimers are in GDP-bound state, owing to GTPase activity of alpha-tubulin. This is Tubulin alpha chain from Notophthalmus viridescens (Eastern newt).